A 768-amino-acid polypeptide reads, in one-letter code: Degenerin mec-4 (768 aa).

Topologically, residues 1-109 (MSWMQNLKNY…GEAPNVYYRA (109 aa)) are cytoplasmic. The helical transmembrane segment at 110-130 (VWVMLFLGCMIMLYLNAQSVL) threads the bilayer. Residues 131–718 (DKYNRNEKIV…VNLLADFGGQ (588 aa)) are Extracellular-facing. Disordered regions lie at residues 187–221 (AGGN…GKRD) and 237–260 (GSQG…ETTT). Over residues 189–200 (GNKEHDGEKEVI) the composition is skewed to basic and acidic residues. Low complexity predominate over residues 203 to 212 (APTTPAPTTK). Residues 243 to 252 (EQEDKDDEKE) are compositionally biased toward acidic residues. N-linked (GlcNAc...) asparagine glycosylation is found at N336, N357, N480, N484, N503, and N671. A helical membrane pass occupies residues 719–739 (LGLWCGISFLTCCEFVFLFLE). At 740 to 768 (TAYMSAEHNYSLYKKKKAEKAKKVASGSF) the chain is on the cytoplasmic side.

This sequence belongs to the amiloride-sensitive sodium channel (TC 1.A.6) family. As to quaternary structure, the channel is probably composed of at least the mec-2, mec-4, mec-6 and mec-10 subunits.

It localises to the membrane. Its function is as follows. Probable sodium channel subunit. May be needed for mechanosensory transduction (touch sensitivity). Negatively regulates the turning step of male mating behavior. In Caenorhabditis briggsae, this protein is Degenerin mec-4 (mec-4).